A 227-amino-acid chain; its full sequence is ATP phosphoribosyltransferase (227 aa).

The protein belongs to the ATP phosphoribosyltransferase family. Short subfamily. In terms of assembly, heteromultimer composed of HisG and HisZ subunits.

The protein resides in the cytoplasm. The catalysed reaction is 1-(5-phospho-beta-D-ribosyl)-ATP + diphosphate = 5-phospho-alpha-D-ribose 1-diphosphate + ATP. The protein operates within amino-acid biosynthesis; L-histidine biosynthesis; L-histidine from 5-phospho-alpha-D-ribose 1-diphosphate: step 1/9. Functionally, catalyzes the condensation of ATP and 5-phosphoribose 1-diphosphate to form N'-(5'-phosphoribosyl)-ATP (PR-ATP). Has a crucial role in the pathway because the rate of histidine biosynthesis seems to be controlled primarily by regulation of HisG enzymatic activity. The protein is ATP phosphoribosyltransferase of Rhodospirillum rubrum (strain ATCC 11170 / ATH 1.1.1 / DSM 467 / LMG 4362 / NCIMB 8255 / S1).